The sequence spans 343 residues: Protein-glutamate methylesterase/protein-glutamine glutaminase 2 (343 aa).

Positions 5–122 (KVLVVDDSAI…SVGDMSGQLV (118 aa)) constitute a Response regulatory domain. Position 56 is a 4-aspartylphosphate (Asp-56). Residues 154–343 (AETSNKVIAI…SIADEIVRMV (190 aa)) form the CheB-type methylesterase domain. Catalysis depends on residues Ser-166, His-192, and Asp-288.

The protein belongs to the CheB family. Post-translationally, phosphorylated by CheA. Phosphorylation of the N-terminal regulatory domain activates the methylesterase activity.

Its subcellular location is the cytoplasm. It catalyses the reaction [protein]-L-glutamate 5-O-methyl ester + H2O = L-glutamyl-[protein] + methanol + H(+). The catalysed reaction is L-glutaminyl-[protein] + H2O = L-glutamyl-[protein] + NH4(+). Functionally, involved in chemotaxis. Part of a chemotaxis signal transduction system that modulates chemotaxis in response to various stimuli. Catalyzes the demethylation of specific methylglutamate residues introduced into the chemoreceptors (methyl-accepting chemotaxis proteins or MCP) by CheR. Also mediates the irreversible deamidation of specific glutamine residues to glutamic acid. The chain is Protein-glutamate methylesterase/protein-glutamine glutaminase 2 from Syntrophus aciditrophicus (strain SB).